The primary structure comprises 1396 residues: DNA-directed RNA polymerase subunit beta (1396 aa).

The protein belongs to the RNA polymerase beta chain family. As to quaternary structure, the RNAP catalytic core consists of 2 alpha, 1 beta, 1 beta' and 1 omega subunit. When a sigma factor is associated with the core the holoenzyme is formed, which can initiate transcription.

The catalysed reaction is RNA(n) + a ribonucleoside 5'-triphosphate = RNA(n+1) + diphosphate. In terms of biological role, DNA-dependent RNA polymerase catalyzes the transcription of DNA into RNA using the four ribonucleoside triphosphates as substrates. The sequence is that of DNA-directed RNA polymerase subunit beta from Erythrobacter litoralis (strain HTCC2594).